Consider the following 189-residue polypeptide: Interferon alpha-5 (189 aa).

The first 21 residues, 1–21 (MALPFVLLMALVVLNCKSICS), serve as a signal peptide directing secretion. 2 disulfide bridges follow: C24–C122 and C52–C162.

It belongs to the alpha/beta interferon family.

It localises to the secreted. Its function is as follows. Produced by macrophages, IFN-alpha have antiviral activities. Interferon stimulates the production of two enzymes: a protein kinase and an oligoadenylate synthetase. The protein is Interferon alpha-5 (IFNA5) of Homo sapiens (Human).